A 401-amino-acid chain; its full sequence is Multidrug resistance protein MdtA (401 aa).

Positions 1 to 20 (MNQNNKHRTLLFRAALAAIA) are cleaved as a signal peptide.

The protein belongs to the membrane fusion protein (MFP) (TC 8.A.1) family. In terms of assembly, part of a tripartite efflux system composed of MdtA, MdtB and MdtC.

The protein resides in the cell inner membrane. In Photorhabdus laumondii subsp. laumondii (strain DSM 15139 / CIP 105565 / TT01) (Photorhabdus luminescens subsp. laumondii), this protein is Multidrug resistance protein MdtA.